Here is a 347-residue protein sequence, read N- to C-terminus: Probable tRNA N6-adenosine threonylcarbamoyltransferase (347 aa).

H109, H113, and Y130 together coordinate a divalent metal cation. Substrate contacts are provided by residues 130–134, D162, G177, E181, and N277; that span reads YVSGG. Residue D305 coordinates a divalent metal cation.

Belongs to the KAE1 / TsaD family. Component of the EKC/KEOPS complex; the whole complex dimerizes. A divalent metal cation is required as a cofactor.

It localises to the cytoplasm. Its subcellular location is the nucleus. It carries out the reaction L-threonylcarbamoyladenylate + adenosine(37) in tRNA = N(6)-L-threonylcarbamoyladenosine(37) in tRNA + AMP + H(+). Its function is as follows. Component of the EKC/KEOPS complex that is required for the formation of a threonylcarbamoyl group on adenosine at position 37 (t(6)A37) in tRNAs that read codons beginning with adenine. The complex is probably involved in the transfer of the threonylcarbamoyl moiety of threonylcarbamoyl-AMP (TC-AMP) to the N6 group of A37. Likely plays a direct catalytic role in this reaction, but requires other protein(s) of the complex to fulfill this activity. This chain is Probable tRNA N6-adenosine threonylcarbamoyltransferase, found in Drosophila melanogaster (Fruit fly).